We begin with the raw amino-acid sequence, 444 residues long: UPF0053 protein YhdP (444 aa).

Residues 1–201 (MDIVNLILVA…YKSGEINQSE (201 aa)) enclose the CNNM transmembrane domain. Helical transmembrane passes span 7 to 27 (ILVA…FAII), 61 to 81 (ACQL…ESTI), and 101 to 121 (VISF…VGEL). CBS domains lie at 220–282 (MIPR…SVDS) and 284–344 (ISQF…IRDE).

Belongs to the UPF0053 family.

The protein resides in the cell membrane. The polypeptide is UPF0053 protein YhdP (yhdP) (Bacillus subtilis (strain 168)).